The sequence spans 1586 residues: Pentafunctional AROM polypeptide (1586 aa).

Residues 1–384 are 3-dehydroquinate synthase; it reads MSEPTKISIL…HEPKASVVSN (384 aa). NAD(+) contacts are provided by residues 44 to 46, 81 to 84, 114 to 116, and D119; these read DTN, ESSK, and GGV. R130 serves as a coordination point for 7-phospho-2-dehydro-3-deoxy-D-arabino-heptonate. Residue 139–140 participates in NAD(+) binding; it reads TT. D146 and K152 together coordinate 7-phospho-2-dehydro-3-deoxy-D-arabino-heptonate. K161 contributes to the NAD(+) binding site. N162 serves as a coordination point for 7-phospho-2-dehydro-3-deoxy-D-arabino-heptonate. NAD(+) is bound by residues 179–182 and N190; that span reads FLET. E194 contacts Zn(2+). Residues 194–197 and K250 each bind 7-phospho-2-dehydro-3-deoxy-D-arabino-heptonate; that span reads EVIK. The active-site Proton acceptor; for 3-dehydroquinate synthase activity is the E260. 7-phospho-2-dehydro-3-deoxy-D-arabino-heptonate-binding positions include 264-268 and H271; that span reads RNLLN. Zn(2+) is bound at residue H271. The active-site Proton acceptor; for 3-dehydroquinate synthase activity is H275. 7-phospho-2-dehydro-3-deoxy-D-arabino-heptonate-binding residues include H287 and K356. Residue H287 coordinates Zn(2+). The EPSP synthase stretch occupies residues 397 to 842; the sequence is VHPGVPKSLN…WDALKQMFSV (446 aa). C824 acts as the For EPSP synthase activity in catalysis. The segment at 864–1056 is shikimate kinase; the sequence is SASVFIIGMR…KKKKHSFFVS (193 aa). 871–878 contacts ATP; the sequence is GMRGAGKT. The tract at residues 1057–1277 is 3-dehydroquinase; that stretch reads LTLPDVEPSG…AAPGQLSAAE (221 aa). Residue H1180 is the Proton acceptor; for 3-dehydroquinate dehydratase activity of the active site. The active-site Schiff-base intermediate with substrate; for 3-dehydroquinate dehydratase activity is K1208. The segment at 1290–1586 is shikimate dehydrogenase; the sequence is AQKFAIFGSP…SKHLDYFLSF (297 aa).

In the N-terminal section; belongs to the sugar phosphate cyclases superfamily. Dehydroquinate synthase family. The protein in the 2nd section; belongs to the EPSP synthase family. This sequence in the 3rd section; belongs to the shikimate kinase family. It in the 4th section; belongs to the type-I 3-dehydroquinase family. In the C-terminal section; belongs to the shikimate dehydrogenase family. As to quaternary structure, homodimer. It depends on Zn(2+) as a cofactor.

It localises to the cytoplasm. The enzyme catalyses 7-phospho-2-dehydro-3-deoxy-D-arabino-heptonate = 3-dehydroquinate + phosphate. The catalysed reaction is 3-dehydroquinate = 3-dehydroshikimate + H2O. It catalyses the reaction shikimate + NADP(+) = 3-dehydroshikimate + NADPH + H(+). It carries out the reaction shikimate + ATP = 3-phosphoshikimate + ADP + H(+). The enzyme catalyses 3-phosphoshikimate + phosphoenolpyruvate = 5-O-(1-carboxyvinyl)-3-phosphoshikimate + phosphate. Its pathway is metabolic intermediate biosynthesis; chorismate biosynthesis; chorismate from D-erythrose 4-phosphate and phosphoenolpyruvate: step 2/7. It participates in metabolic intermediate biosynthesis; chorismate biosynthesis; chorismate from D-erythrose 4-phosphate and phosphoenolpyruvate: step 3/7. The protein operates within metabolic intermediate biosynthesis; chorismate biosynthesis; chorismate from D-erythrose 4-phosphate and phosphoenolpyruvate: step 4/7. It functions in the pathway metabolic intermediate biosynthesis; chorismate biosynthesis; chorismate from D-erythrose 4-phosphate and phosphoenolpyruvate: step 5/7. Its pathway is metabolic intermediate biosynthesis; chorismate biosynthesis; chorismate from D-erythrose 4-phosphate and phosphoenolpyruvate: step 6/7. Functionally, the AROM polypeptide catalyzes 5 consecutive enzymatic reactions in prechorismate polyaromatic amino acid biosynthesis. This Penicillium rubens (strain ATCC 28089 / DSM 1075 / NRRL 1951 / Wisconsin 54-1255) (Penicillium chrysogenum) protein is Pentafunctional AROM polypeptide.